The primary structure comprises 75 residues: Small ribosomal subunit protein eS28 (75 aa).

It belongs to the eukaryotic ribosomal protein eS28 family.

This is Small ribosomal subunit protein eS28 from Natronomonas pharaonis (strain ATCC 35678 / DSM 2160 / CIP 103997 / JCM 8858 / NBRC 14720 / NCIMB 2260 / Gabara) (Halobacterium pharaonis).